A 501-amino-acid chain; its full sequence is Lysine--tRNA ligase (501 aa).

Residues Glu411 and Glu418 each contribute to the Mg(2+) site.

Belongs to the class-II aminoacyl-tRNA synthetase family. As to quaternary structure, homodimer. Mg(2+) serves as cofactor.

Its subcellular location is the cytoplasm. It carries out the reaction tRNA(Lys) + L-lysine + ATP = L-lysyl-tRNA(Lys) + AMP + diphosphate. The polypeptide is Lysine--tRNA ligase (Clostridium perfringens (strain 13 / Type A)).